The primary structure comprises 229 residues: Cytidylate kinase (229 aa).

Position 12–20 (12–20 (GPSGAGKGT)) interacts with ATP.

Belongs to the cytidylate kinase family. Type 1 subfamily.

Its subcellular location is the cytoplasm. It catalyses the reaction CMP + ATP = CDP + ADP. It carries out the reaction dCMP + ATP = dCDP + ADP. This Pseudomonas aeruginosa (strain LESB58) protein is Cytidylate kinase.